Reading from the N-terminus, the 910-residue chain is Disease susceptibility protein LOV1 (910 aa).

The stretch at 22–60 (ARLNGIGEQVDGLKRQLGRLQSLLKDADAKKHESERVRN) forms a coiled coil. Residues 169 to 461 (EQSVEALAGH…AAEGIITSSD (293 aa)) form the NB-ARC domain. 6 LRR repeats span residues 584 to 609 (LPLL…IGDL), 610 to 632 (IHLR…LRNL), 634 to 655 (LLLY…LKEM), 700 to 725 (MTKL…LGQL), 726 to 751 (RSLE…IVLN), and 847 to 871 (MPLL…NYIT).

It belongs to the disease resistance NB-LRR family. RPP8/HRT subfamily.

Its function is as follows. Confers susceptibility to the fungus Cochliobolus victoriae by conditioning victorin-dependent (victorin is a toxin synthesized by C.victoriae) induction of defense-associated proteins. This is Disease susceptibility protein LOV1 (LOV1) from Arabidopsis thaliana (Mouse-ear cress).